The sequence spans 336 residues: Transmembrane protease serine 12 (336 aa).

An N-terminal signal peptide occupies residues 1–18; the sequence is MASWALSAALLCLGGAFA. Residues 19–312 are Extracellular-facing; it reads YSELHSLSLR…HYLSQGNINR (294 aa). A Peptidase S1 domain is found at 66–306; sequence IIGGSQADTG…FQEWMTHYLS (241 aa). Cys-95 and Cys-111 form a disulfide bridge. Residues His-110 and Asp-159 each act as charge relay system in the active site. Cystine bridges form between Cys-194/Cys-262, Cys-225/Cys-241, and Cys-252/Cys-282. 3 N-linked (GlcNAc...) asparagine glycosylation sites follow: Asn-207, Asn-237, and Asn-246. Ser-256 (charge relay system) is an active-site residue. Residues 313–333 form a helical membrane-spanning segment; that stretch reads LFNMDIVLGQVLTALGSVILL. Topologically, residues 334–336 are cytoplasmic; that stretch reads GVT.

The protein belongs to the peptidase S1 family. As to expression, exclusively expressed in the testis, from spermatocytes to elongated spermatids (at protein level).

It localises to the cell membrane. It is found in the cytoplasmic vesicle. The protein resides in the secretory vesicle. Its subcellular location is the acrosome. Its function is as follows. Required for male fertility. Plays a critical role in sperm capacitation and acrosome reactions during fertilization, and also plays a role in the regulation of proteins involved in spermatogenesis. Regulates protein pathways that promote chromosomal synapsis formation, double-strand break repair, formation of the inner mitochondrial membrane cristae and apoptosis in developing sperm. Required for normal sperm motility and binding to the zona pellucida, potentially via a role in ADAM3 protein maturation. The chain is Transmembrane protease serine 12 from Mus musculus (Mouse).